We begin with the raw amino-acid sequence, 96 residues long: Small ribosomal subunit protein bS18 (96 aa).

The protein belongs to the bacterial ribosomal protein bS18 family. As to quaternary structure, part of the 30S ribosomal subunit. Forms a tight heterodimer with protein bS6.

Functionally, binds as a heterodimer with protein bS6 to the central domain of the 16S rRNA, where it helps stabilize the platform of the 30S subunit. In Gluconobacter oxydans (strain 621H) (Gluconobacter suboxydans), this protein is Small ribosomal subunit protein bS18.